Consider the following 527-residue polypeptide: Bifunctional purine biosynthesis protein PurH (527 aa).

The 144-residue stretch at 1–144 (MNRRALISVS…KNHESVAIIV (144 aa)) folds into the MGS-like domain.

This sequence belongs to the PurH family.

It carries out the reaction (6R)-10-formyltetrahydrofolate + 5-amino-1-(5-phospho-beta-D-ribosyl)imidazole-4-carboxamide = 5-formamido-1-(5-phospho-D-ribosyl)imidazole-4-carboxamide + (6S)-5,6,7,8-tetrahydrofolate. The catalysed reaction is IMP + H2O = 5-formamido-1-(5-phospho-D-ribosyl)imidazole-4-carboxamide. It participates in purine metabolism; IMP biosynthesis via de novo pathway; 5-formamido-1-(5-phospho-D-ribosyl)imidazole-4-carboxamide from 5-amino-1-(5-phospho-D-ribosyl)imidazole-4-carboxamide (10-formyl THF route): step 1/1. Its pathway is purine metabolism; IMP biosynthesis via de novo pathway; IMP from 5-formamido-1-(5-phospho-D-ribosyl)imidazole-4-carboxamide: step 1/1. The polypeptide is Bifunctional purine biosynthesis protein PurH (Heliobacterium modesticaldum (strain ATCC 51547 / Ice1)).